Here is a 443-residue protein sequence, read N- to C-terminus: Glutamine synthetase (443 aa).

Positions 11 to 97 constitute a GS beta-grasp domain; the sequence is VQVEVPRPRF…VYGYIYKGDE (87 aa). In terms of domain architecture, GS catalytic spans 103–443; that stretch reads PRGILKRVLE…EWELERYFYV (341 aa). Mg(2+)-binding residues include glutamate 126 and glutamate 128. Glutamate 176 is a binding site for ATP. Residues glutamate 181 and glutamate 188 each contribute to the Mg(2+) site. L-glutamate is bound at residue glycine 233. Mg(2+) is bound at residue histidine 237. Residues 239 to 241 and serine 241 contribute to the ATP site; that span reads HIS. The L-glutamate site is built by arginine 287, glutamate 293, and arginine 305. ATP-binding residues include arginine 305 and arginine 310. Glutamate 322 provides a ligand contact to Mg(2+). Residue arginine 324 coordinates L-glutamate.

Belongs to the glutamine synthetase family. As to quaternary structure, oligomer of 12 subunits arranged in the form of two hexagons. The cofactor is Mg(2+). It depends on Mn(2+) as a cofactor.

The protein localises to the cytoplasm. It catalyses the reaction L-glutamate + NH4(+) + ATP = L-glutamine + ADP + phosphate + H(+). The catalysed reaction is hydroxylamine + L-glutamate + ATP = L-glutamine hydroxamate + ADP + phosphate. With respect to regulation, the activity of this enzyme is not controlled by adenylation. Functionally, carries out the ATP-dependent synthesis of glutamine from ammonium nitrogen and glutamate. Exhibits both L-gamma-glutamylhydroxamate synthetase and gamma-glutamyltransferase activities when using hydroxylamine as substrate; in fact, the enzyme possesses low biosynthetic activity, suggesting that the reaction is biased towards the degradation of glutamine under ammonia-rich conditions. Might play some role in ammonia assimilation under ammonia-starvation conditions. Can also use GTP instead of ATP in the synthetase reaction, but not CTP or UTP. This chain is Glutamine synthetase, found in Thermococcus kodakarensis (strain ATCC BAA-918 / JCM 12380 / KOD1) (Pyrococcus kodakaraensis (strain KOD1)).